The chain runs to 314 residues: Versiconal hemiacetal acetate esterase (314 aa).

An Involved in the stabilization of the negatively charged intermediate by the formation of the oxyanion hole motif is present at residues 85-87; it reads HGG. Catalysis depends on residues S154, D255, and H285.

It belongs to the 'GDXG' lipolytic enzyme family.

The enzyme catalyses (2S,3S)-versiconal hemiacetal acetate + H2O = (2S-3S)-versiconal hemiacetal + acetate + H(+). The catalysed reaction is (3S)-versiconol acetate + H2O = (S)-versiconol + acetate + H(+). It participates in mycotoxin biosynthesis; aflatoxin biosynthesis. Functionally, versiconal hemiacetal acetate esterase; part of the gene cluster that mediates the biosynthesis of aflatoxins, a group of polyketide-derived furanocoumarins, and part of the most toxic and carcinogenic compounds among the known mycotoxins. The four major aflatoxins produced by A.parasiticus are aflatoxin B1 (AFB1), aflatoxin B2 (AFB2), aflatoxin G1 (AFG1) and aflatoxin G2 (AFG2). Within the aflatoxin pathway, the versiconal hemiacetal acetate esterase aflJ converts versiconal hemiacetal acetate (VHA) into versiconal (VAL). The biosynthesis of aflatoxins begins with the norsolorinic acid synthase aflC that combines a hexanoyl starter unit produced by the fatty acid synthase aflA/aflB and 7 malonyl-CoA extender units to synthesize the precursor NOR. The second step is the conversion of NOR to averantin and requires the norsolorinic acid ketoreductase aflD, which catalyzes the dehydration of norsolorinic acid to form (1'S)-averantin. The norsolorinic acid reductases aflE and aflF may also play a role in the conversion of NOR to AVN. The cytochrome P450 monooxygenase aflG then catalyzes the hydroxylation of AVN to 5'hydroxyaverantin (HAVN). The next step is performed by the 5'-hydroxyaverantin dehydrogenase aflH that transforms HAVN to 5'-oxoaverantin (OAVN) which is further converted to averufin (AVF) by aflK that plays a dual role in the pathway, as a 5'-oxoaverantin cyclase that mediates conversion of 5'-oxoaverantin, as well as a versicolorin B synthase in a later step in the pathway. The averufin oxidase aflI catalyzes the conversion of AVF to versiconal hemiacetal acetate (VHA). VHA is then the substrate for the versiconal hemiacetal acetate esterase aflJ to yield versiconal (VAL). Versicolorin B synthase aflK then converts VAL to versicolorin B (VERB) by closing the bisfuran ring of aflatoxin which is required for DNA-binding, thus giving to aflatoxin its activity as a mutagen. Then, the activity of the versicolorin B desaturase aflL leads to versicolorin A (VERA). A branch point starts from VERB since it can also be converted to dihydrodemethylsterigmatocystin (DMDHST), probably also by aflL, VERA being a precursor for aflatoxins B1 and G1, and DMDHST for aflatoxins B2 and G2. Next, the versicolorin reductase aflM and the cytochrome P450 monooxygenase aflN are involved in conversion of VERA to demethylsterigmatocystin (DMST). AflX and aflY seem also involved in this step, through probable aflX-mediated epoxide ring-opening step following versicolorin A oxidation and aflY-mediated Baeyer-Villiger oxidation required for the formation of the xanthone ring. The methyltransferase aflO then leads to the modification of DMST to sterigmatocystin (ST), and of DMDHST to dihydrosterigmatocystin (DHST). Both ST and DHST are then substrates of the O-methyltransferase aflP to yield O-methylsterigmatocystin (OMST) and dihydro-O-methylsterigmatocystin (DHOMST), respectively. Finally OMST is converted to aflatoxins B1 and G1, and DHOMST to aflatoxins B2 and G2, via the action of several enzymes including O-methylsterigmatocystin oxidoreductase aflQ, the cytochrome P450 monooxygenase aflU, but also the NADH-dependent flavin oxidoreductase nadA which is specifically required for the synthesis of AFG1. The chain is Versiconal hemiacetal acetate esterase from Aspergillus parasiticus (strain ATCC 56775 / NRRL 5862 / SRRC 143 / SU-1).